Here is a 309-residue protein sequence, read N- to C-terminus: MRIFFASSDSIALEVLRKVSDHYNVVGVLTAPDKPSGRGLFLKVNDIKVEAINRNITVLDPVVLNSDVIGMVKKLKPDLMLVFSYGKIFRQEFLDIFPMGCINVHPSLLPKYRGPSPIQTAILNGDTIGGITVQKMALEMDSGNILAQSQFEIKSFNTSADIFRYVSLNSFNLVLEALSKLNKGHIGIVQDSNQATYCSFFNKQHRMLNFNLSAFEIKNKINACNPWPLARAKLDKDEIIFHRADFIKTTDYSDQAIGKIVSFDPSKGILVKTEDGILLLLELQRSGRKVVDYKSFYNGNRDLIGKIFS.

Residue 107–110 (SLLP) coordinates (6S)-5,6,7,8-tetrahydrofolate.

Belongs to the Fmt family.

It catalyses the reaction L-methionyl-tRNA(fMet) + (6R)-10-formyltetrahydrofolate = N-formyl-L-methionyl-tRNA(fMet) + (6S)-5,6,7,8-tetrahydrofolate + H(+). In terms of biological role, attaches a formyl group to the free amino group of methionyl-tRNA(fMet). The formyl group appears to play a dual role in the initiator identity of N-formylmethionyl-tRNA by promoting its recognition by IF2 and preventing the misappropriation of this tRNA by the elongation apparatus. This chain is Methionyl-tRNA formyltransferase, found in Borrelia turicatae (strain 91E135).